The following is a 762-amino-acid chain: Polyribonucleotide nucleotidyltransferase (762 aa).

Residues D531 and D537 each coordinate Mg(2+). The KH domain occupies 597–656 (PRVTTIKVPVDKIGEVIGPKGKVINSITEETGAQISIEDDGTVFVGATDGPSAQAAIDKI). Residues 668 to 737 (GERFLGTVVK…KRGKISLVLV (70 aa)) enclose the S1 motif domain.

It belongs to the polyribonucleotide nucleotidyltransferase family. Mg(2+) is required as a cofactor.

It is found in the cytoplasm. It carries out the reaction RNA(n+1) + phosphate = RNA(n) + a ribonucleoside 5'-diphosphate. Involved in mRNA degradation. Catalyzes the phosphorolysis of single-stranded polyribonucleotides processively in the 3'- to 5'-direction. The chain is Polyribonucleotide nucleotidyltransferase from Mycobacterium marinum (strain ATCC BAA-535 / M).